The chain runs to 206 residues: GTP cyclohydrolase 1 (206 aa).

Residues Cys-97, His-100, and Cys-168 each coordinate Zn(2+).

Belongs to the GTP cyclohydrolase I family. As to quaternary structure, toroid-shaped homodecamer, composed of two pentamers of five dimers.

It catalyses the reaction GTP + H2O = 7,8-dihydroneopterin 3'-triphosphate + formate + H(+). The protein operates within cofactor biosynthesis; 7,8-dihydroneopterin triphosphate biosynthesis; 7,8-dihydroneopterin triphosphate from GTP: step 1/1. The sequence is that of GTP cyclohydrolase 1 from Chromobacterium violaceum (strain ATCC 12472 / DSM 30191 / JCM 1249 / CCUG 213 / NBRC 12614 / NCIMB 9131 / NCTC 9757 / MK).